The sequence spans 329 residues: Tryptophan--tRNA ligase (329 aa).

ATP-binding positions include 9–11 and 17–18; these read QPS and GN. The short motif at 10-18 is the 'HIGH' region element; sequence PSGTITLGN. Residue aspartate 132 participates in L-tryptophan binding. ATP contacts are provided by residues 144-146, valine 183, and 192-196; these read GDD and KMSKS. The short motif at 192-196 is the 'KMSKS' region element; the sequence is KMSKS.

It belongs to the class-I aminoacyl-tRNA synthetase family. As to quaternary structure, homodimer.

Its subcellular location is the cytoplasm. The enzyme catalyses tRNA(Trp) + L-tryptophan + ATP = L-tryptophyl-tRNA(Trp) + AMP + diphosphate + H(+). Its function is as follows. Catalyzes the attachment of tryptophan to tRNA(Trp). This is Tryptophan--tRNA ligase from Bacillus anthracis.